Consider the following 121-residue polypeptide: MGTGEKTLKSFQLHRKQSVKVKDVPKGCLAIKVGSQGEEQQRFIVPVLYFNHPLFMQLLKEAEDEYGFDQKGTITIPCHVEEFRYVQALIDGERSVYNGNNHHHRHGGRDQYHHLVGCFRA.

The protein belongs to the ARG7 family. Expressed in roots, leaves and stems.

It is found in the nucleus. Its subcellular location is the cytoplasm. May play a role in the apical hook development. The polypeptide is Auxin-responsive protein SAUR32 (Arabidopsis thaliana (Mouse-ear cress)).